Here is a 262-residue protein sequence, read N- to C-terminus: Hydroxyethylthiazole kinase (262 aa).

Methionine 43 is a binding site for substrate. Residues arginine 118 and threonine 164 each contribute to the ATP site. Residue alanine 191 participates in substrate binding.

It belongs to the Thz kinase family. The cofactor is Mg(2+).

The catalysed reaction is 5-(2-hydroxyethyl)-4-methylthiazole + ATP = 4-methyl-5-(2-phosphooxyethyl)-thiazole + ADP + H(+). It participates in cofactor biosynthesis; thiamine diphosphate biosynthesis; 4-methyl-5-(2-phosphoethyl)-thiazole from 5-(2-hydroxyethyl)-4-methylthiazole: step 1/1. Functionally, catalyzes the phosphorylation of the hydroxyl group of 4-methyl-5-beta-hydroxyethylthiazole (THZ). This is Hydroxyethylthiazole kinase from Cereibacter sphaeroides (strain ATCC 17025 / ATH 2.4.3) (Rhodobacter sphaeroides).